A 258-amino-acid polypeptide reads, in one-letter code: MNTPLRVGIVGCGVLANAMAGHLARQPRPVEIVGCLVRDPGRARGALPCHGSWEALLAQRPDVVVECAGQAALAQYAQAILAAGVDLVPASVGALADDALRGALLEAAAAAGARIRIPSGAMVGIDGLAAARHVGVAEVLYRGTMPPVALQRYVSGPLPERGLAFAGSAREAVARFPKNVNLTGTIALAGIGFDRTRVEMLIDPDATANVHELLARGEFGDFHARVSGLRISESSPSSRIVAGSLAQAALGSGFLALS.

NAD(+)-binding residues include Ala121 and Asn181. His211 is an active-site residue.

It belongs to the L-aspartate dehydrogenase family.

It catalyses the reaction L-aspartate + NADP(+) + H2O = oxaloacetate + NH4(+) + NADPH + H(+). The enzyme catalyses L-aspartate + NAD(+) + H2O = oxaloacetate + NH4(+) + NADH + H(+). The protein operates within cofactor biosynthesis; NAD(+) biosynthesis; iminoaspartate from L-aspartate (dehydrogenase route): step 1/1. Specifically catalyzes the NAD or NADP-dependent dehydrogenation of L-aspartate to iminoaspartate. The polypeptide is L-aspartate dehydrogenase 1 (Bordetella pertussis (strain Tohama I / ATCC BAA-589 / NCTC 13251)).